We begin with the raw amino-acid sequence, 222 residues long: Cytidylate kinase (222 aa).

12-20 lines the ATP pocket; it reads GPSGAGKGT.

It belongs to the cytidylate kinase family. Type 1 subfamily.

It is found in the cytoplasm. The enzyme catalyses CMP + ATP = CDP + ADP. The catalysed reaction is dCMP + ATP = dCDP + ADP. This Methylococcus capsulatus (strain ATCC 33009 / NCIMB 11132 / Bath) protein is Cytidylate kinase.